The sequence spans 242 residues: Carbendazim hydrolyzing esterase (242 aa).

Serine 77 acts as the Acyl-ester intermediate in catalysis.

Belongs to the AB hydrolase superfamily.

It localises to the secreted. It carries out the reaction carbendazim + H2O = 2-aminobenzimidazole + methanol + CO2. It catalyses the reaction carbendazim + H2O = N-(1H-1,3-benzodiazol-2-yl)carbamate + methanol + H(+). The enzyme catalyses N-(1H-1,3-benzodiazol-2-yl)carbamate + H(+) = 2-aminobenzimidazole + CO2. In terms of biological role, catalyzes the hydrolysis of the fungicide carbendazim (methyl-1H-benzimidazol-2-ylcarbamate or MBC) to 2-aminobenzimidazole (2-AB). Following hydrolysis of the carbamate ester, the carbamate decarboxylates spontaneously. Can hydrolyze model carboxylesters such as methyl salicylate, alpha-naphthyl acetate and p-nitrophenyl acetate. In addition, shows substantial hydrolytic activity in vitro against widespread pollutants with carboxylester, carbamate and amide linkages, such as dimethyl phthalate, propanil and chlorpropham. In Nocardioides sp. (strain SG-4G), this protein is Carbendazim hydrolyzing esterase.